Here is a 1012-residue protein sequence, read N- to C-terminus: RAS protein activator like-3 (1012 aa).

3 disordered regions span residues 1-128 (MDPP…TPDV), 147-196 (GNED…QIHN), and 208-229 (KKAKSELGASASRDGPPSALGS). The segment covering 7-21 (SRASQTQPVAPSPLT) has biased composition (polar residues). Ser18 carries the phosphoserine modification. Residues 27–39 (SGGGAEKGAGGFR) show a composition bias toward gly residues. Residues 50–62 (QSHQETTASSQPA) show a composition bias toward polar residues. The residue at position 51 (Ser51) is a Phosphoserine. Residues 100–113 (SEPEPENPEPEPEL) are compositionally biased toward acidic residues. Residues Ser160, Ser162, Ser163, and Ser166 each carry the phosphoserine modification. Positions 160–171 (SASSESSIHVAS) are enriched in low complexity. Basic and acidic residues predominate over residues 175 to 186 (KDPDRTPGKTDP). The PH domain maps to 193 to 294 (QIHNVRGLLK…WIEDLRRHFQ (102 aa)). Ser212, Ser225, Ser229, and Ser232 each carry phosphoserine. Thr235 carries the phosphothreonine modification. In terms of domain architecture, C2 spans 285–405 (WIEDLRRHFQ…APAAGLERWF (121 aa)). A Ras-GAP domain is found at 475–683 (GRAQALVTDL…PAMQHFLDQV (209 aa)). The tract at residues 752-887 (PAPRTQGHSS…DKDQALGTHR (136 aa)) is disordered. Residues Ser788 and Ser791 each carry the phosphoserine modification. A compositionally biased stretch (basic residues) spans 826–841 (PARRRPSAGPRPRPKG). A coiled-coil region spans residues 889–989 (VGKLAELQCE…KDTIQNLQLL (101 aa)). The span at 990–999 (PRTSESQSQP) shows a compositional bias: polar residues. Residues 990–1012 (PRTSESQSQPVPLKAPCINGDTT) are disordered.

It localises to the cytoplasm. It is found in the cell cortex. Functions as a Ras GTPase-activating protein. Plays an important role in the expansion and functions of natural killer T (NKT) cells in the liver by negatively regulating RAS activity and the down-stream ERK signaling pathway. The chain is RAS protein activator like-3 (RASAL3) from Bos taurus (Bovine).